The primary structure comprises 63 residues: Large ribosomal subunit protein bL32 (63 aa).

The protein belongs to the bacterial ribosomal protein bL32 family.

The chain is Large ribosomal subunit protein bL32 from Lacticaseibacillus paracasei (strain ATCC 334 / BCRC 17002 / CCUG 31169 / CIP 107868 / KCTC 3260 / NRRL B-441) (Lactobacillus paracasei).